The sequence spans 191 residues: Orotate phosphoribosyltransferase (191 aa).

114–122 contributes to the 5-phospho-alpha-D-ribose 1-diphosphate binding site; sequence EDVITTGGS. Orotate contacts are provided by Thr-118 and Arg-146.

Belongs to the purine/pyrimidine phosphoribosyltransferase family. PyrE subfamily. In terms of assembly, homodimer. Mg(2+) serves as cofactor.

The enzyme catalyses orotidine 5'-phosphate + diphosphate = orotate + 5-phospho-alpha-D-ribose 1-diphosphate. The protein operates within pyrimidine metabolism; UMP biosynthesis via de novo pathway; UMP from orotate: step 1/2. Its function is as follows. Catalyzes the transfer of a ribosyl phosphate group from 5-phosphoribose 1-diphosphate to orotate, leading to the formation of orotidine monophosphate (OMP). This chain is Orotate phosphoribosyltransferase, found in Desulforamulus reducens (strain ATCC BAA-1160 / DSM 100696 / MI-1) (Desulfotomaculum reducens).